The following is a 473-amino-acid chain: Photosystem II CP43 reaction center protein (473 aa).

Positions 1 to 14 (MKTLYSLRRFYPVE) are excised as a propeptide. T15 carries the N-acetylthreonine modification. T15 is modified (phosphothreonine). 5 helical membrane-spanning segments follow: residues 69-93 (LFEV…PHLA), 134-155 (LLGP…KDRN), 178-200 (KALY…RKIT), 255-275 (KPFA…LSYS), and 291-312 (WFNN…ASQA). E367 contributes to the [CaMn4O5] cluster binding site. A helical transmembrane segment spans residues 447 to 471 (RARAAAAGFEKGIDRDFEPVLSMTP).

This sequence belongs to the PsbB/PsbC family. PsbC subfamily. PSII is composed of 1 copy each of membrane proteins PsbA, PsbB, PsbC, PsbD, PsbE, PsbF, PsbH, PsbI, PsbJ, PsbK, PsbL, PsbM, PsbT, PsbX, PsbY, PsbZ, Psb30/Ycf12, at least 3 peripheral proteins of the oxygen-evolving complex and a large number of cofactors. It forms dimeric complexes. Binds multiple chlorophylls and provides some of the ligands for the Ca-4Mn-5O cluster of the oxygen-evolving complex. It may also provide a ligand for a Cl- that is required for oxygen evolution. PSII binds additional chlorophylls, carotenoids and specific lipids. serves as cofactor.

It localises to the plastid. It is found in the chloroplast thylakoid membrane. In terms of biological role, one of the components of the core complex of photosystem II (PSII). It binds chlorophyll and helps catalyze the primary light-induced photochemical processes of PSII. PSII is a light-driven water:plastoquinone oxidoreductase, using light energy to abstract electrons from H(2)O, generating O(2) and a proton gradient subsequently used for ATP formation. The polypeptide is Photosystem II CP43 reaction center protein (Gossypium hirsutum (Upland cotton)).